Consider the following 1103-residue polypeptide: Isoleucine--tRNA ligase (1103 aa).

A 'HIGH' region motif is present at residues 53–63 (PFANGLPHYGH). The 'KMSKS' region motif lies at 628–632 (KLSKR). Lysine 631 serves as a coordination point for ATP.

Belongs to the class-I aminoacyl-tRNA synthetase family. IleS type 2 subfamily. As to quaternary structure, monomer. It depends on Zn(2+) as a cofactor.

It localises to the cytoplasm. It catalyses the reaction tRNA(Ile) + L-isoleucine + ATP = L-isoleucyl-tRNA(Ile) + AMP + diphosphate. Catalyzes the attachment of isoleucine to tRNA(Ile). As IleRS can inadvertently accommodate and process structurally similar amino acids such as valine, to avoid such errors it has two additional distinct tRNA(Ile)-dependent editing activities. One activity is designated as 'pretransfer' editing and involves the hydrolysis of activated Val-AMP. The other activity is designated 'posttransfer' editing and involves deacylation of mischarged Val-tRNA(Ile). This Rickettsia akari (strain Hartford) protein is Isoleucine--tRNA ligase.